The following is a 140-amino-acid chain: Small ribosomal subunit protein uS12 (140 aa).

The segment at 1–44 (MPTFNQLVRKGRKTMEKNSQAPALQKGFNSLRKKTTDASAPQKR) is disordered. D102 is subject to 3-methylthioaspartic acid. The disordered stretch occupies residues 120–140 (VAKRRQARSKYGAKRPKEAKK). Over residues 121–140 (AKRRQARSKYGAKRPKEAKK) the composition is skewed to basic residues.

Belongs to the universal ribosomal protein uS12 family. As to quaternary structure, part of the 30S ribosomal subunit. Contacts proteins S8 and S17. May interact with IF1 in the 30S initiation complex.

Its function is as follows. With S4 and S5 plays an important role in translational accuracy. In terms of biological role, interacts with and stabilizes bases of the 16S rRNA that are involved in tRNA selection in the A site and with the mRNA backbone. Located at the interface of the 30S and 50S subunits, it traverses the body of the 30S subunit contacting proteins on the other side and probably holding the rRNA structure together. The combined cluster of proteins S8, S12 and S17 appears to hold together the shoulder and platform of the 30S subunit. This chain is Small ribosomal subunit protein uS12, found in Lachnoclostridium phytofermentans (strain ATCC 700394 / DSM 18823 / ISDg) (Clostridium phytofermentans).